We begin with the raw amino-acid sequence, 184 residues long: MKIAQEIRAGNVIMHGKDPMVVLKTEYARGGRGAATVRMKLKSLIANFGTEIVLRADDKIDNVILDKKECTYSYFADPMYVCMDAEYNQYEVEAGNMGDALNYLEDGMALEVVFYDGKAISVELPTSVEREITWTEPAVKGDTSGKVMKPAKIATGFEVPVPLFVAQGDRIEIDTRTGEYRRRV.

The protein belongs to the elongation factor P family.

Its subcellular location is the cytoplasm. It participates in protein biosynthesis; polypeptide chain elongation. In terms of biological role, involved in peptide bond synthesis. Stimulates efficient translation and peptide-bond synthesis on native or reconstituted 70S ribosomes in vitro. Probably functions indirectly by altering the affinity of the ribosome for aminoacyl-tRNA, thus increasing their reactivity as acceptors for peptidyl transferase. This Verminephrobacter eiseniae (strain EF01-2) protein is Elongation factor P.